The sequence spans 201 residues: dITP/XTP pyrophosphatase (201 aa).

9 to 14 (TRNSGK) contacts substrate. Positions 42 and 71 each coordinate Mg(2+). D71 acts as the Proton acceptor in catalysis. Substrate-binding positions include S72, 156-159 (FGYD), K178, and 183-184 (HR).

This sequence belongs to the HAM1 NTPase family. As to quaternary structure, homodimer. Mg(2+) serves as cofactor.

It carries out the reaction XTP + H2O = XMP + diphosphate + H(+). It catalyses the reaction dITP + H2O = dIMP + diphosphate + H(+). The enzyme catalyses ITP + H2O = IMP + diphosphate + H(+). Pyrophosphatase that catalyzes the hydrolysis of nucleoside triphosphates to their monophosphate derivatives, with a high preference for the non-canonical purine nucleotides XTP (xanthosine triphosphate), dITP (deoxyinosine triphosphate) and ITP. Seems to function as a house-cleaning enzyme that removes non-canonical purine nucleotides from the nucleotide pool, thus preventing their incorporation into DNA/RNA and avoiding chromosomal lesions. This Lactococcus lactis subsp. lactis (strain IL1403) (Streptococcus lactis) protein is dITP/XTP pyrophosphatase (ynbD).